Consider the following 479-residue polypeptide: Aspartyl/glutamyl-tRNA(Asn/Gln) amidotransferase subunit B (479 aa).

It belongs to the GatB/GatE family. GatB subfamily. Heterotrimer of A, B and C subunits.

The enzyme catalyses L-glutamyl-tRNA(Gln) + L-glutamine + ATP + H2O = L-glutaminyl-tRNA(Gln) + L-glutamate + ADP + phosphate + H(+). The catalysed reaction is L-aspartyl-tRNA(Asn) + L-glutamine + ATP + H2O = L-asparaginyl-tRNA(Asn) + L-glutamate + ADP + phosphate + 2 H(+). In terms of biological role, allows the formation of correctly charged Asn-tRNA(Asn) or Gln-tRNA(Gln) through the transamidation of misacylated Asp-tRNA(Asn) or Glu-tRNA(Gln) in organisms which lack either or both of asparaginyl-tRNA or glutaminyl-tRNA synthetases. The reaction takes place in the presence of glutamine and ATP through an activated phospho-Asp-tRNA(Asn) or phospho-Glu-tRNA(Gln). This chain is Aspartyl/glutamyl-tRNA(Asn/Gln) amidotransferase subunit B, found in Myxococcus xanthus (strain DK1622).